Consider the following 1040-residue polypeptide: Multidrug resistance protein MdtB (1040 aa).

The next 12 membrane-spanning stretches (helical) occupy residues 25–45 (LLMAAILLAGIIGYRFLPVAA), 347–367 (LMLAIALVVMIIYLFLRNIPA), 369–389 (IIPGVAVPLSLIGTFAVMVFL), 396–416 (LTLMALTIATGFVVDDAIVVI), 440–460 (IGFTIISLTFSLIAVLIPLLF), 472–492 (FAVTLAVAILISAVVSLTLTP), 537–557 (WLTLSVAFATLLLSVMLWIVI), 863–883 (LGSTVWLIVAAVVAMYIVLGV), 888–908 (FIHPITILSTLPTAGVGALLA), 910–930 (IIAGSELDIIAIIGIILLIGI), 968–988 (ILMTTLAALLGALPLMLSTGV), and 998–1018 (IAMVGGLLVSQVLTLFTTPVI).

The protein belongs to the resistance-nodulation-cell division (RND) (TC 2.A.6) family. MdtB subfamily. In terms of assembly, part of a tripartite efflux system composed of MdtA, MdtB and MdtC. MdtB forms a heteromultimer with MdtC.

The protein localises to the cell inner membrane. This Salmonella schwarzengrund (strain CVM19633) protein is Multidrug resistance protein MdtB.